Here is a 178-residue protein sequence, read N- to C-terminus: ATP-dependent protease subunit HslV (178 aa).

Residue threonine 7 is part of the active site. Positions 162, 165, and 168 each coordinate Na(+).

It belongs to the peptidase T1B family. HslV subfamily. A double ring-shaped homohexamer of HslV is capped on each side by a ring-shaped HslU homohexamer. The assembly of the HslU/HslV complex is dependent on binding of ATP.

The protein resides in the cytoplasm. It catalyses the reaction ATP-dependent cleavage of peptide bonds with broad specificity.. Allosterically activated by HslU binding. Protease subunit of a proteasome-like degradation complex believed to be a general protein degrading machinery. In Sulfurihydrogenibium sp. (strain YO3AOP1), this protein is ATP-dependent protease subunit HslV.